The sequence spans 415 residues: Carboxypeptidase G2 (415 aa).

An N-terminal signal peptide occupies residues 1–22; the sequence is MRPSIHRTAIAAVLATAFVAGT. Histidine 112 contributes to the Zn(2+) binding site. Aspartate 114 is a catalytic residue. Aspartate 141 contacts Zn(2+). Catalysis depends on glutamate 175, which acts as the Proton acceptor. Zn(2+)-binding residues include glutamate 176, glutamate 200, and histidine 385.

The protein belongs to the peptidase M20A family. In terms of assembly, homodimer. Requires Zn(2+) as cofactor.

The catalysed reaction is Release of C-terminal glutamate residues from a wide range of N-acylating moieties, including peptidyl, aminoacyl, benzoyl, benzyloxycarbonyl, folyl and pteroyl groups.. Catalyzes the hydrolysis of reduced and non-reduced folates to pteroates and L-glutamate. This enzyme has a broad specificity. The chain is Carboxypeptidase G2 (cpg2) from Pseudomonas sp. (strain RS-16).